The sequence spans 1136 residues: Nitric oxide synthase, inducible (1136 aa).

Residues Cys107 and Cys112 each coordinate Zn(2+). Position 197 (Cys197) interacts with heme b. Residues Gln260, Trp369, Tyr370, and Glu374 each contribute to the L-arginine site. Arg378, Val459, Trp460, and Phe473 together coordinate (6R)-L-erythro-5,6,7,8-tetrahydrobiopterin. Tyr488 lines the heme b pocket. Residues 512–532 are calmodulin-binding; sequence LSILAKAVLLASLLLQKTMAA. A Flavodoxin-like domain is found at 536–674; the sequence is VTVIYATETG…AFRTWAVTAF (139 aa). Thr542, Glu543, Thr544, Lys546, Ser547, Ser588, Thr589, Ser625, Cys632, Glu658, and Gln662 together coordinate FMN. The FAD-binding FR-type domain occupies 727 to 967; the sequence is KNVIPMKLKF…VRSADGFRLP (241 aa). Arg747 serves as a coordination point for NADP(+). His769, Arg903, Tyr905, Ser906, Thr921, Ala923, Tyr927, Val940, Cys941, and Ser942 together coordinate FAD. The NADP(+) site is built by Thr981, Arg1014, Ser1043, Arg1044, Lys1050, Tyr1052, Gln1054, and Asp1087.

It belongs to the NOS family. As to quaternary structure, homodimer. Requires heme b as cofactor. FAD is required as a cofactor. It depends on FMN as a cofactor. (6R)-L-erythro-5,6,7,8-tetrahydrobiopterin serves as cofactor.

The protein resides in the cytoplasm. It localises to the cytosol. The catalysed reaction is 2 L-arginine + 3 NADPH + 4 O2 + H(+) = 2 L-citrulline + 2 nitric oxide + 3 NADP(+) + 4 H2O. Not stimulated by calcium/calmodulin. In terms of biological role, produces nitric oxide (NO) which is a messenger molecule with diverse functions throughout the body. NO may serve as both a paracrine and autocrine signal for modulating osteoclast bone resorption. Also has nitrosylase activity and mediates cysteine S-nitrosylation of cytoplasmic target proteins such COX2. The polypeptide is Nitric oxide synthase, inducible (NOS2) (Gallus gallus (Chicken)).